A 222-amino-acid polypeptide reads, in one-letter code: Eukaryotic translation initiation factor 3 subunit K (222 aa).

In terms of domain architecture, PCI spans 46 to 208; it reads YDLEANLAVL…KIKTKNITEK (163 aa).

It belongs to the eIF-3 subunit K family. As to quaternary structure, component of the eukaryotic translation initiation factor 3 (eIF-3) complex. The eIF-3 complex interacts with pix.

It localises to the cytoplasm. Functionally, component of the eukaryotic translation initiation factor 3 (eIF-3) complex, which is involved in protein synthesis of a specialized repertoire of mRNAs and, together with other initiation factors, stimulates binding of mRNA and methionyl-tRNAi to the 40S ribosome. The eIF-3 complex specifically targets and initiates translation of a subset of mRNAs involved in cell proliferation. This is Eukaryotic translation initiation factor 3 subunit K from Drosophila ananassae (Fruit fly).